Reading from the N-terminus, the 183-residue chain is Ribonuclease H (183 aa).

Positions 2 to 151 constitute an RNase H type-1 domain; the sequence is SQARFIAFSD…VDQLAQAAAR (150 aa). Aspartate 11, glutamate 57, aspartate 79, and aspartate 143 together coordinate Mg(2+).

Belongs to the RNase H family. As to quaternary structure, monomer. It depends on Mg(2+) as a cofactor.

The protein resides in the cytoplasm. The enzyme catalyses Endonucleolytic cleavage to 5'-phosphomonoester.. Functionally, endonuclease that specifically degrades the RNA of RNA-DNA hybrids. In Anaeromyxobacter sp. (strain K), this protein is Ribonuclease H.